Consider the following 705-residue polypeptide: Tryptophan synthase (705 aa).

Positions 1 to 293 are tryptophan synthase alpha chain; the sequence is MEAIKKVFEQ…QLTPNAETAK (293 aa). Catalysis depends on proton acceptor residues E49 and D60. The segment at 266-287 is disordered; the sequence is KGEPSRVRSPGAAQRTPSQLTP. The tract at residues 294 to 705 is tryptophan synthase beta chain; the sequence is GVENILPARF…HVSSNAIPSK (412 aa). Residue K381 is modified to N6-(pyridoxal phosphate)lysine.

The protein in the N-terminal section; belongs to the TrpA family. This sequence in the C-terminal section; belongs to the TrpB family. Pyridoxal 5'-phosphate serves as cofactor.

The enzyme catalyses (1S,2R)-1-C-(indol-3-yl)glycerol 3-phosphate + L-serine = D-glyceraldehyde 3-phosphate + L-tryptophan + H2O. It participates in amino-acid biosynthesis; L-tryptophan biosynthesis; L-tryptophan from chorismate: step 5/5. This chain is Tryptophan synthase (TRP-1), found in Coprinopsis cinerea (Inky cap fungus).